The primary structure comprises 344 residues: Sulfate/thiosulfate import ATP-binding protein CysA (344 aa).

The ABC transporter domain occupies 9–239; sequence IQVSQVSKQF…PATPFVMSFI (231 aa). An ATP-binding site is contributed by 41–48; that stretch reads GPSGSGKS.

This sequence belongs to the ABC transporter superfamily. Sulfate/tungstate importer (TC 3.A.1.6) family. The complex is composed of two ATP-binding proteins (CysA), two transmembrane proteins (CysT and CysW) and a solute-binding protein (CysP).

The protein localises to the cell inner membrane. The catalysed reaction is sulfate(out) + ATP + H2O = sulfate(in) + ADP + phosphate + H(+). The enzyme catalyses thiosulfate(out) + ATP + H2O = thiosulfate(in) + ADP + phosphate + H(+). Its function is as follows. Part of the ABC transporter complex CysAWTP involved in sulfate/thiosulfate import. Responsible for energy coupling to the transport system. The sequence is that of Sulfate/thiosulfate import ATP-binding protein CysA from Synechococcus elongatus (strain ATCC 33912 / PCC 7942 / FACHB-805) (Anacystis nidulans R2).